Consider the following 443-residue polypeptide: MKEIFSHNRPDKLLLIDAPADALVLVPGEYAIVRFDGVEDVRADPTVLDSLRFGTVTLTNLRLAWNSRGDPNGHSISVGLSTITKISVGNLHRDRQQKVAGLEESVPPDNGLFITGNRSVVLHATFNQLGYKFELKPSSREFTQQNSNFFNILQAVYRAHDTTRMYRRVRVRSSIVRDGQPILLSREVILSSISNIGLVSAIGVSNVLGVFVRTSHRIIWFSPANESYNVSIPYVDVLSLSLKEIKGSDDKLLVFSIPANDNMKEFLSPCNELDRKTLRAKEHRGKGLSSYSIATFAFDVQKATPSVPIQSLAQSVLISIQKAQAQPDYGVEIKAQGSVDEASALVSSEQSPGGFGVQAGVEVVKTGPQTNSKDGSKVLKIIQAVASRTNFAARYIVSSSCAPGHVDGKDGGSGKLTMTLDDVLGVAFQSVPGIDSIGDLWSL.

Belongs to the BBS5 family.

The protein localises to the cytoplasm. It localises to the cytoskeleton. Its subcellular location is the flagellum axoneme. The polypeptide is BBSome complex member BBS5 homolog (Giardia intestinalis (strain ATCC 50803 / WB clone C6) (Giardia lamblia)).